Reading from the N-terminus, the 217-residue chain is MFFKMLKEDIDTVFDQDPAARSYIEVVLTYSGLHAIWAHRIAHAFYKRKLYFLARIISQVSRFFTGVEIHPAATIGRRFFIDHGMGVVIGETCEIGDNVTVFQGVTLGGTGKEKGKRHPTILDDALIATGAKVLGSITVGKGAKIGAGSVVLKDVPDHSTVVGIPGRVVVQNGKKINRDLNHQDLPDPISDRFKELEREMEKLKGELASLSRKEEQS.

This sequence belongs to the transferase hexapeptide repeat family.

It is found in the cytoplasm. The enzyme catalyses L-serine + acetyl-CoA = O-acetyl-L-serine + CoA. Its pathway is amino-acid biosynthesis; L-cysteine biosynthesis; L-cysteine from L-serine: step 1/2. Its activity is regulated as follows. Inhibited by cysteine. Its function is as follows. Catalyzes the acetylation of serine by acetyl-CoA to produce O-acetylserine (OAS). The chain is Serine acetyltransferase from Bacillus pumilus (strain SAFR-032).